We begin with the raw amino-acid sequence, 392 residues long: 8-amino-7-oxononanoate synthase (392 aa).

A substrate-binding site is contributed by Arg-21. A pyridoxal 5'-phosphate-binding site is contributed by Gly-108–Phe-109. His-133 lines the substrate pocket. Pyridoxal 5'-phosphate is bound by residues Ser-181, Asp-206 to His-209, and Thr-237 to Lys-240. Residue Lys-240 is modified to N6-(pyridoxal phosphate)lysine. Position 354 (Thr-354) interacts with substrate.

The protein belongs to the class-II pyridoxal-phosphate-dependent aminotransferase family. BioF subfamily. Homodimer. It depends on pyridoxal 5'-phosphate as a cofactor.

The enzyme catalyses 6-carboxyhexanoyl-[ACP] + L-alanine + H(+) = (8S)-8-amino-7-oxononanoate + holo-[ACP] + CO2. It functions in the pathway cofactor biosynthesis; biotin biosynthesis. In terms of biological role, catalyzes the decarboxylative condensation of pimeloyl-[acyl-carrier protein] and L-alanine to produce 8-amino-7-oxononanoate (AON), [acyl-carrier protein], and carbon dioxide. In Symbiobacterium thermophilum (strain DSM 24528 / JCM 14929 / IAM 14863 / T), this protein is 8-amino-7-oxononanoate synthase.